The primary structure comprises 126 residues: Aspartate 1-decarboxylase (126 aa).

The Schiff-base intermediate with substrate; via pyruvic acid role is filled by Ser25. At Ser25 the chain carries Pyruvic acid (Ser). Thr57 is a substrate binding site. Residue Tyr58 is the Proton donor of the active site. 73-75 (GAA) lines the substrate pocket.

This sequence belongs to the PanD family. As to quaternary structure, heterooctamer of four alpha and four beta subunits. Requires pyruvate as cofactor. In terms of processing, is synthesized initially as an inactive proenzyme, which is activated by self-cleavage at a specific serine bond to produce a beta-subunit with a hydroxyl group at its C-terminus and an alpha-subunit with a pyruvoyl group at its N-terminus.

Its subcellular location is the cytoplasm. The enzyme catalyses L-aspartate + H(+) = beta-alanine + CO2. It functions in the pathway cofactor biosynthesis; (R)-pantothenate biosynthesis; beta-alanine from L-aspartate: step 1/1. Functionally, catalyzes the pyruvoyl-dependent decarboxylation of aspartate to produce beta-alanine. This is Aspartate 1-decarboxylase from Psychrobacter sp. (strain PRwf-1).